Here is a 378-residue protein sequence, read N- to C-terminus: Erythronate-4-phosphate dehydrogenase (378 aa).

Positions 45 and 66 each coordinate substrate. Residues Asp146 and Thr175 each contribute to the NAD(+) site. The active site involves Arg208. Asp232 provides a ligand contact to NAD(+). The active site involves Glu237. His254 functions as the Proton donor in the catalytic mechanism. Gly257 serves as a coordination point for NAD(+). Tyr258 contributes to the substrate binding site.

This sequence belongs to the D-isomer specific 2-hydroxyacid dehydrogenase family. PdxB subfamily. As to quaternary structure, homodimer.

Its subcellular location is the cytoplasm. The catalysed reaction is 4-phospho-D-erythronate + NAD(+) = (R)-3-hydroxy-2-oxo-4-phosphooxybutanoate + NADH + H(+). The protein operates within cofactor biosynthesis; pyridoxine 5'-phosphate biosynthesis; pyridoxine 5'-phosphate from D-erythrose 4-phosphate: step 2/5. Its function is as follows. Catalyzes the oxidation of erythronate-4-phosphate to 3-hydroxy-2-oxo-4-phosphonooxybutanoate. This is Erythronate-4-phosphate dehydrogenase from Klebsiella pneumoniae (strain 342).